The chain runs to 133 residues: Profilin-2 (133 aa).

This sequence belongs to the profilin family. Occurs in many kinds of cells as a complex with monomeric actin in a 1:1 ratio.

The protein localises to the cytoplasm. It localises to the cytoskeleton. Functionally, binds to actin and affects the structure of the cytoskeleton. At high concentrations, profilin prevents the polymerization of actin, whereas it enhances it at low concentrations. By binding to PIP2, it inhibits the formation of IP3 and DG. This is Profilin-2 from Artemisia vulgaris (Mugwort).